Reading from the N-terminus, the 166-residue chain is Tegument protein UL55 homolog (166 aa).

It belongs to the alphaherpesvirinae HHV-1 UL55 family.

The protein resides in the virion tegument. It is found in the host nucleus matrix. The protein is Tegument protein UL55 homolog (MDV070) of Gallid herpesvirus 2 (strain Chicken/Md5/ATCC VR-987) (GaHV-2).